Consider the following 1202-residue polypeptide: DNA-directed RNA polymerase subunit beta (1202 aa).

A compositionally biased stretch (acidic residues) spans 1151–1162; sequence LRDMDEEDDDVV. The segment at 1151 to 1202 is disordered; the sequence is LRDMDEEDDDVVNVDALSKYAEKQNEKTNASAEEAKAPSTESAPVETKNNQN. Polar residues predominate over residues 1189-1202; that stretch reads STESAPVETKNNQN.

Belongs to the RNA polymerase beta chain family. In terms of assembly, the RNAP catalytic core consists of 2 alpha, 1 beta, 1 beta' and 1 omega subunit. When a sigma factor is associated with the core the holoenzyme is formed, which can initiate transcription.

The enzyme catalyses RNA(n) + a ribonucleoside 5'-triphosphate = RNA(n+1) + diphosphate. DNA-dependent RNA polymerase catalyzes the transcription of DNA into RNA using the four ribonucleoside triphosphates as substrates. This Pediococcus pentosaceus (strain ATCC 25745 / CCUG 21536 / LMG 10740 / 183-1w) protein is DNA-directed RNA polymerase subunit beta.